A 282-amino-acid polypeptide reads, in one-letter code: ATP synthase gamma chain (282 aa).

It belongs to the ATPase gamma chain family. In terms of assembly, F-type ATPases have 2 components, CF(1) - the catalytic core - and CF(0) - the membrane proton channel. CF(1) has five subunits: alpha(3), beta(3), gamma(1), delta(1), epsilon(1). CF(0) has three main subunits: a, b and c.

The protein resides in the cell membrane. Functionally, produces ATP from ADP in the presence of a proton gradient across the membrane. The gamma chain is believed to be important in regulating ATPase activity and the flow of protons through the CF(0) complex. The chain is ATP synthase gamma chain from Clostridium botulinum (strain 657 / Type Ba4).